A 216-amino-acid polypeptide reads, in one-letter code: Pyrrolidone-carboxylate peptidase (216 aa).

Residues E80, C143, and H168 contribute to the active site.

It belongs to the peptidase C15 family. As to quaternary structure, homotetramer.

The protein resides in the cytoplasm. It carries out the reaction Release of an N-terminal pyroglutamyl group from a polypeptide, the second amino acid generally not being Pro.. In terms of biological role, removes 5-oxoproline from various penultimate amino acid residues except L-proline. This is Pyrrolidone-carboxylate peptidase from Cupriavidus necator (strain ATCC 17699 / DSM 428 / KCTC 22496 / NCIMB 10442 / H16 / Stanier 337) (Ralstonia eutropha).